A 3583-amino-acid polypeptide reads, in one-letter code: Surfactin synthase subunit 2 (3583 aa).

3 consecutive Carrier domains span residues alanine 965–glutamate 1039, alanine 2005–alanine 2080, and alanine 3034–glutamate 3108. Serine 999, serine 2040, and serine 3069 each carry O-(pantetheine 4'-phosphoryl)serine.

Belongs to the ATP-dependent AMP-binding enzyme family. The cofactor is pantetheine 4'-phosphate.

It functions in the pathway antibiotic biosynthesis; surfactin biosynthesis. In terms of biological role, this protein is a multifunctional enzyme able to activate and polymerize the amino acids Leu, Glu, Asp and Val. Activation sites for these AA consist of individual domains. The chain is Surfactin synthase subunit 2 (srfAB) from Bacillus subtilis (strain 168).